The sequence spans 342 residues: Phosphoribosylformylglycinamidine cyclo-ligase (342 aa).

It belongs to the AIR synthase family.

It localises to the cytoplasm. The catalysed reaction is 2-formamido-N(1)-(5-O-phospho-beta-D-ribosyl)acetamidine + ATP = 5-amino-1-(5-phospho-beta-D-ribosyl)imidazole + ADP + phosphate + H(+). The protein operates within purine metabolism; IMP biosynthesis via de novo pathway; 5-amino-1-(5-phospho-D-ribosyl)imidazole from N(2)-formyl-N(1)-(5-phospho-D-ribosyl)glycinamide: step 2/2. The protein is Phosphoribosylformylglycinamidine cyclo-ligase of Staphylococcus aureus (strain MRSA252).